We begin with the raw amino-acid sequence, 102 residues long: Thioredoxin (102 aa).

In terms of domain architecture, Thioredoxin spans 2–102 (VTEIRSLKQL…KTKIIDLFNN (101 aa)). C30 and C33 form a disulfide bridge.

It belongs to the thioredoxin family.

In terms of biological role, participates in various redox reactions through the reversible oxidation of its active center dithiol to a disulfide and catalyzes dithiol-disulfide exchange reactions. This is Thioredoxin (trxA) from Mycoplasma genitalium (strain ATCC 33530 / DSM 19775 / NCTC 10195 / G37) (Mycoplasmoides genitalium).